The sequence spans 467 residues: Cytochrome c-552 (467 aa).

The N-terminal stretch at 1-27 (MMKKMTGKSFALSALVAASFMAAGAMA) is a signal peptide. H87 lines the heme c pocket. Heme is bound by residues C115, C118, and K119. The heme c site is built by C153, C156, H157, C195, C198, and H199. Residues E201, Y202, K250, and Q252 each contribute to the Ca(2+) site. Substrate is bound at residue Y202. H253 provides a ligand contact to substrate. Heme c contacts are provided by H264, C271, C274, H275, H290, C303, C306, H307, and H382.

This sequence belongs to the cytochrome c-552 family. Ca(2+) serves as cofactor. Requires heme c as cofactor.

It localises to the periplasm. The enzyme catalyses 6 Fe(III)-[cytochrome c] + NH4(+) + 2 H2O = 6 Fe(II)-[cytochrome c] + nitrite + 8 H(+). Its pathway is nitrogen metabolism; nitrate reduction (assimilation). Catalyzes the reduction of nitrite to ammonia, consuming six electrons in the process. The chain is Cytochrome c-552 from Shewanella sp. (strain W3-18-1).